Reading from the N-terminus, the 525-residue chain is Putative ribose/galactose/methyl galactoside import ATP-binding protein (525 aa).

The segment covering 1 to 15 has biased composition (polar residues); that stretch reads MFGSATANPPAQRNL. The tract at residues 1-23 is disordered; it reads MFGSATANPPAQRNLPSGDGDGG. ABC transporter domains follow at residues 33–269 and 279–523; these read LEIS…VGRE and KPAG…SGHK. ATP is bound at residue 65–72; it reads GENGAGKS.

Belongs to the ABC transporter superfamily. Carbohydrate importer 2 (CUT2) (TC 3.A.1.2) family.

The protein resides in the cell inner membrane. It carries out the reaction D-ribose(out) + ATP + H2O = D-ribose(in) + ADP + phosphate + H(+). The enzyme catalyses D-galactose(out) + ATP + H2O = D-galactose(in) + ADP + phosphate + H(+). Functionally, part of an ABC transporter complex involved in carbohydrate import. Could be involved in ribose, galactose and/or methyl galactoside import. Responsible for energy coupling to the transport system. This Pseudomonas syringae pv. syringae (strain B728a) protein is Putative ribose/galactose/methyl galactoside import ATP-binding protein.